The sequence spans 496 residues: Germacrene A hydroxylase (496 aa).

Residues 1–2 (ME) lie on the Cytoplasmic side of the membrane. A helical; Signal-anchor for type II membrane protein membrane pass occupies residues 3–23 (LTLTTSLGLAVFVFILFKLLT). The Lumenal portion of the chain corresponds to 24–496 (GSKSTKNSLP…TAYKTANNSA (473 aa)). Cysteine 432 is a binding site for heme. The N-linked (GlcNAc...) asparagine glycan is linked to asparagine 493.

The protein belongs to the cytochrome P450 family. Heme serves as cofactor.

Its subcellular location is the endoplasmic reticulum membrane. It carries out the reaction (+)-(R)-germacrene A + 3 reduced [NADPH--hemoprotein reductase] + 3 O2 = germacra-1(10),4,11(13)-trien-12-oate + 3 oxidized [NADPH--hemoprotein reductase] + 4 H2O + 4 H(+). It participates in secondary metabolite biosynthesis; terpenoid biosynthesis. In terms of biological role, involved in the biosynthesis of germacrene-derived sesquiterpene lactones. Catalyzes three consecutive oxidations of germacrene A to produce germacrene A acid. Could also catalyze the three-step oxidation of non-natural substrate amorphadiene to artemisinic acid. This chain is Germacrene A hydroxylase, found in Barnadesia spinosa (Spiny barnadesia).